Reading from the N-terminus, the 81-residue chain is Protein GPR15LG (81 aa).

Positions 1 to 24 (MRFLALTSLLCILLLCLSFFSAEG) are cleaved as a signal peptide. 2 cysteine pairs are disulfide-bonded: Cys40–Cys63 and Cys41–Cys60.

Interacts with SUSD2; the interaction is direct.

It localises to the secreted. In terms of biological role, highly cationic protein that has multiple functions. Acts as a chemotactic factor that mediates lymphocytes recruitment to epithelia through binding and activation of the G-protein coupled receptor GPR15. May be a tumor suppressor; together with SUSD2 has a growth inhibitory effect on colon cancer cells which includes G1 cell cycle arrest. May regulate keratinocyte proliferation. In addition, through activation of Mas-related G protein-coupled receptors (MRGPRs) contributes to pruritogenesis by activating itch-selective sensory neurons and mast cells degranulation. Its function is as follows. Has antimicrobial activity against Gram-positive bacteria, including Staphylococcus aureus and Actinomyces spec., and Mycoplasma hominis and lentivirus. In Sus scrofa (Pig), this protein is Protein GPR15LG (GPR15LG).